Consider the following 893-residue polypeptide: Translation initiation factor IF-2 (893 aa).

Residues 49-303 form a disordered region; it reads LNREAGSGPD…KGSSLQQGFQ (255 aa). Residues 68 to 82 are compositionally biased toward polar residues; that stretch reads STLNIPGTGGKSKSV. 2 stretches are compositionally biased toward basic and acidic residues: residues 93–159 and 166–216; these read VKRD…KDKV and DMTK…EENK. A compositionally biased stretch (basic residues) spans 254 to 269; it reads GRGRNAKAARPAKKGN. Positions 270-283 are enriched in basic and acidic residues; it reads KHAESKADREEARA. A tr-type G domain is found at 392–561; that stretch reads PRAPVVTIMG…LLQAEVLELK (170 aa). Positions 401–408 are G1; it reads GHVDHGKT. GTP is bound at residue 401–408; sequence GHVDHGKT. The interval 426–430 is G2; the sequence is GITQH. Residues 447 to 450 form a G3 region; the sequence is DTPG. Residues 447 to 451 and 501 to 504 contribute to the GTP site; these read DTPGH and NKID. The G4 stretch occupies residues 501 to 504; that stretch reads NKID. Residues 537-539 are G5; it reads SAK.

This sequence belongs to the TRAFAC class translation factor GTPase superfamily. Classic translation factor GTPase family. IF-2 subfamily.

The protein resides in the cytoplasm. In terms of biological role, one of the essential components for the initiation of protein synthesis. Protects formylmethionyl-tRNA from spontaneous hydrolysis and promotes its binding to the 30S ribosomal subunits. Also involved in the hydrolysis of GTP during the formation of the 70S ribosomal complex. In Salmonella arizonae (strain ATCC BAA-731 / CDC346-86 / RSK2980), this protein is Translation initiation factor IF-2.